The primary structure comprises 314 residues: Zinc transporter ZIP3 (314 aa).

The Extracellular segment spans residues 1–3 (MNL). Residues 4 to 24 (IFAKVLCLLAILVLMMLGSLI) form a helical membrane-spanning segment. Topologically, residues 25-41 (PVKISEADFDKSSRSRK) are cytoplasmic. Residues 42-62 (ILSLSNSFAGGVFLATCFNAL) traverse the membrane as a helical segment. At 63–84 (LPAVREKFFDLLKIGNISTDYP) the chain is on the extracellular side. A helical transmembrane segment spans residues 85–105 (LAETIMMVGFFLTVFVEQTVM). The Cytoplasmic portion of the chain corresponds to 106 to 169 (TFRKEKPSFI…KELSSSSPIR (64 aa)). Residues 170 to 190 (LFSLVFALSAHSVFEGLALGL) form a helical membrane-spanning segment. The Extracellular segment spans residues 191-196 (QEDGNK). The helical transmembrane segment at 197–217 (LLSLFIGVVIHETLVAMALGV) threads the bilayer. At 218-229 (SMAKVNTHLKDA) the chain is on the cytoplasmic side. A helical transmembrane segment spans residues 230–250 (IKMAVLVSTMIPIGIVVGMAI). Residues 251-262 (QSAQNMASSIAS) are Extracellular-facing. Residues 263–283 (ALLQGIAGGTFIFVTFFEILV) traverse the membrane as a helical segment. The Cytoplasmic segment spans residues 284–292 (KELEEKNDR). A helical transmembrane segment spans residues 293–313 (LLKVLFLVLGYTVLAVLVLFK). Residue W314 is a topological domain, extracellular.

This sequence belongs to the ZIP transporter (TC 2.A.5) family.

The protein resides in the cell membrane. It is found in the apical cell membrane. The catalysed reaction is Zn(2+)(in) = Zn(2+)(out). Its function is as follows. Transporter for the divalent cation Zn(2+). Mediates the influx of Zn(2+) into cells from extracellular space. This Xenopus tropicalis (Western clawed frog) protein is Zinc transporter ZIP3 (slc39a3).